We begin with the raw amino-acid sequence, 87 residues long: Large ribosomal subunit protein bL31B (87 aa).

It belongs to the bacterial ribosomal protein bL31 family. Type B subfamily. Part of the 50S ribosomal subunit.

This Burkholderia pseudomallei (strain 1106a) protein is Large ribosomal subunit protein bL31B.